The following is a 486-amino-acid chain: MFLTSILLSSLYLFNRILAWQGNVKHFYLFASNLLLLFIVVLYINFNTFSNSFQFNFELFNSLNPFGLSNSDISNGLLFGIDGLSLTFILLTVLLIPLTLLGNWYNINFNSNLYYTLVLAIGLVILLNFWALDYISFYILFEATLPLLFILIHIYGSSDSERASFYVLMFTLSGSLFMLLSIVVISIVLNTTNFINHNLFVLSLDLQTIIWLGLFIAIMVKTPLFPIHVWLPVVHSESPLAGSMILAGLILKLALYAILRLLLPLLCEAQILYTPMIYIISLLTIILTSLATLRQIDLKVIIAYSSISHMGIAILGVCSNTSLGIYGSIVLGVAHGFVSPALFLIVGGILYDRYHIRIVNYYKGLTTYMPQLATYIIILSFANIGTPLTGNFTGEFLSLQGGFIRNPIIGGISCISVLLAAIYQLKLTNKLTGGISSIYMHRTNDVTIREKFIMNILIISTLIIGICPQIMYNLLYWTVNNYIYII.

The next 13 membrane-spanning stretches (helical) occupy residues histidine 26–phenylalanine 46, glycine 76–isoleucine 96, leucine 113–leucine 132, tyrosine 134–glycine 156, phenylalanine 165–isoleucine 185, isoleucine 209–leucine 231, proline 239–leucine 259, isoleucine 271–alanine 291, leucine 298–cysteine 318, isoleucine 329–isoleucine 349, leucine 372–phenylalanine 392, proline 407–leucine 427, and phenylalanine 452–tyrosine 472.

It belongs to the complex I subunit 4 family. Complex I is composed of 37 different subunits.

The protein localises to the mitochondrion membrane. The enzyme catalyses a ubiquinone + NADH + 5 H(+)(in) = a ubiquinol + NAD(+) + 4 H(+)(out). In terms of biological role, core subunit of the mitochondrial membrane respiratory chain NADH dehydrogenase (Complex I) that is believed to belong to the minimal assembly required for catalysis. Complex I functions in the transfer of electrons from NADH to the respiratory chain. The immediate electron acceptor for the enzyme is believed to be ubiquinone. This chain is NADH-ubiquinone oxidoreductase chain 4 (ND4), found in Yarrowia lipolytica (strain CLIB 122 / E 150) (Yeast).